The primary structure comprises 321 residues: Protoheme IX farnesyltransferase (321 aa).

The next 10 helical transmembrane spans lie at 28-48 (VMSLVIFTALAGMLIAPDPVH), 49-69 (PIVGFASLLAIAVGAGASGAL), 94-114 (VMPNEALAFGLTLSFLSVFTL), 116-136 (IVANWLAAGFLAFTIFFYVVI), 149-169 (IVIGGAAGAFPPMVGYAAATG), 176-196 (FILFAIIFIWTPPHFWALALG), 222-242 (ILLYTLLLAPLGVAPWLLGFA), 247-267 (GMLSIALGAAMLFFAARVYIV), 277-297 (AKALFGFSILYLFLLFAEIVV), and 300-320 (LVPIVVAMGAWLTSGMFPGFF).

It belongs to the UbiA prenyltransferase family. Protoheme IX farnesyltransferase subfamily.

It is found in the cell inner membrane. The enzyme catalyses heme b + (2E,6E)-farnesyl diphosphate + H2O = Fe(II)-heme o + diphosphate. It functions in the pathway porphyrin-containing compound metabolism; heme O biosynthesis; heme O from protoheme: step 1/1. Its function is as follows. Converts heme B (protoheme IX) to heme O by substitution of the vinyl group on carbon 2 of heme B porphyrin ring with a hydroxyethyl farnesyl side group. The protein is Protoheme IX farnesyltransferase of Beijerinckia indica subsp. indica (strain ATCC 9039 / DSM 1715 / NCIMB 8712).